The chain runs to 141 residues: HTH-type transcriptional repressor NsrR (141 aa).

The region spanning 2 to 129 (QLTSFTDYGL…DNYTLADLVE (128 aa)) is the HTH rrf2-type domain. Residues 28–51 (ISQVTEVYGVSRNHMVKIINQLSR) constitute a DNA-binding region (H-T-H motif). Residues Cys-91, Cys-96, and Cys-102 each coordinate [2Fe-2S] cluster.

[2Fe-2S] cluster is required as a cofactor.

Its function is as follows. Nitric oxide-sensitive repressor of genes involved in protecting the cell against nitrosative stress. May require iron for activity. This is HTH-type transcriptional repressor NsrR from Enterobacter sp. (strain 638).